Reading from the N-terminus, the 316-residue chain is MSDVSKASLPKAIFLMGPTASGKTALAIELRKVLPVELISVDSALIYRGMDIGTAKPTASELKAAPHRLLDILDPAQAYSAADFRRDALAEMAEITAAGRIPLLVGGTMLYFKALLEGLSPLPSAEPEIRARIEQQAAEQGWDVLHRQLQDIDPVAAARIHPNDPQRLSRALEVFFISGKTLTELTQTSGDALPYQVHQFAIAPASRELLHQRIEQRFHQMLASGFEAEVRALFARGDLHTDLPSIRCVGYRQMWSYIEGEISYDEMVYRGVCATRQLAKRQVTWLRGWEGVRWLDSEKPDQARNEVLQVVGAIAN.

17 to 24 is a binding site for ATP; the sequence is GPTASGKT. 19-24 is a substrate binding site; the sequence is TASGKT. Interaction with substrate tRNA regions lie at residues 42–45, 166–170, and 247–252; these read DSAL, QRLSR, and RCVGYR.

It belongs to the IPP transferase family. As to quaternary structure, monomer. It depends on Mg(2+) as a cofactor.

The catalysed reaction is adenosine(37) in tRNA + dimethylallyl diphosphate = N(6)-dimethylallyladenosine(37) in tRNA + diphosphate. Catalyzes the transfer of a dimethylallyl group onto the adenine at position 37 in tRNAs that read codons beginning with uridine, leading to the formation of N6-(dimethylallyl)adenosine (i(6)A). In Citrobacter koseri (strain ATCC BAA-895 / CDC 4225-83 / SGSC4696), this protein is tRNA dimethylallyltransferase.